Here is a 417-residue protein sequence, read N- to C-terminus: D-amino acid dehydrogenase (417 aa).

3-17 serves as a coordination point for FAD; the sequence is VVILGSGVVGVSTAW.

It belongs to the DadA oxidoreductase family. Requires FAD as cofactor.

It catalyses the reaction a D-alpha-amino acid + A + H2O = a 2-oxocarboxylate + AH2 + NH4(+). The protein operates within amino-acid degradation; D-alanine degradation; NH(3) and pyruvate from D-alanine: step 1/1. Its function is as follows. Oxidative deamination of D-amino acids. In Pectobacterium carotovorum subsp. carotovorum (strain PC1), this protein is D-amino acid dehydrogenase.